We begin with the raw amino-acid sequence, 328 residues long: P2Y purinoceptor 6 (328 aa).

The Extracellular portion of the chain corresponds to 1 to 27 (MEWDNGTGQALGLPPTTCVYRENFKQL). Residue asparagine 5 is glycosylated (N-linked (GlcNAc...) asparagine). Residues 28–48 (LLPPVYSAVLAAGLPLNICVI) form a helical membrane-spanning segment. Residues 49-62 (TQICTSRRALTRTA) lie on the Cytoplasmic side of the membrane. Residues 63–83 (VYTLNLALADLLYACSLPLLI) traverse the membrane as a helical segment. The Extracellular segment spans residues 84 to 101 (YNYAQGDHWPFGDFACRL). The cysteines at positions 99 and 177 are disulfide-linked. The helical transmembrane segment at 102 to 122 (VRFLFYANLHGSILFLTCISF) threads the bilayer. Residues 123–144 (QRYLGICHPLAPWHKRGGRRAA) lie on the Cytoplasmic side of the membrane. Residues 145–165 (WLVCVAVWLAVTTQCLPTAIF) form a helical membrane-spanning segment. Over 166–194 (AATGIQRNRTVCYDLSPPALATHYMPYGM) the chain is Extracellular. The chain crosses the membrane as a helical span at residues 195 to 215 (ALTVIGFLLPFAALLACYCLL). At 216–236 (ACRLCRQDGPAEPVAQERRGK) the chain is on the cytoplasmic side. Residues 237–257 (AARMAVVVAAAFAISFLPFHI) form a helical membrane-spanning segment. At 258–280 (TKTAYLAVRSTPGVPCTVLEAFA) the chain is on the extracellular side. A helical membrane pass occupies residues 281–303 (AAYKGTRPFASANSVLDPILFYF). Topologically, residues 304–328 (TQKKFRRRPHELLQKLTAKWQRQGR) are cytoplasmic.

It belongs to the G-protein coupled receptor 1 family.

Its subcellular location is the cell membrane. Its function is as follows. Receptor for extracellular UDP &gt; UTP &gt; ATP. The activity of this receptor is mediated by G proteins which activate a phosphatidylinositol-calcium second messenger system. The protein is P2Y purinoceptor 6 (P2RY6) of Homo sapiens (Human).